A 702-amino-acid chain; its full sequence is MNSLFASTARGLEELLKTELESLGARECQVVQGGVHFEGDTRLIYQSLMWSRLASRIMLPLGACKVYSDLDLYLGVQATDWTEIFAPGATFAVHFSGLNDEIRNSQYGALKVKDAIVDSFTRKNLERPNVDRENPDLRINVWLNKETAHISLDLCGEGLHQRGYRDRAGIAPIKENLAAAIVMRSGWQPGTPLLDPMCGSGTLLIEAAMMATDRAPGLHRGQWGFNGWAQHDDAIWKEVKAEAQVRARKGLADYGSRFYGSDSDARVIERAASNARRAGIGELISFEVKDVAQLTNPLPKGPYGTVISNPPYGERLDSEPALIALHSLLGRSMKDYFGGWNLSLFSGSPELLSCLQLRAERQFKAKNGPLDCVQKNYHLTEKEGDSKPSTVAEDYANRLRKNLKKFEKWAKQEGIECYRLYDADLPEYNVAVDRYADWIVVQEYAAPKTIDAQKARQRLLDIIAATIGVLGIAPNKLVLKTRERQKGTNQYQKMSDKGDFIEVGEYNARLWVNLTDYLDTGLFLDHRIARRMLGQMSKGKDFLNLFAYTGSASVHAGLGGARSTTTMDMSRTYLEWAERNLRLNGLTGRQHRLLQADVLGWLRDTDEQFDLIFIDPPTFSNSKRMEDTFDVQRDHIRLMSDLKRLLRKGGTIMFSNNKRGFRMDNDGLAALGLKAQEISQKTLSQDFARNRQIHNCWLITAV.

Residues 43–154 (LIYQSLMWSR…KETAHISLDL (112 aa)) enclose the THUMP domain.

The protein belongs to the methyltransferase superfamily. RlmKL family.

The protein localises to the cytoplasm. It carries out the reaction guanosine(2445) in 23S rRNA + S-adenosyl-L-methionine = N(2)-methylguanosine(2445) in 23S rRNA + S-adenosyl-L-homocysteine + H(+). The catalysed reaction is guanosine(2069) in 23S rRNA + S-adenosyl-L-methionine = N(2)-methylguanosine(2069) in 23S rRNA + S-adenosyl-L-homocysteine + H(+). Specifically methylates the guanine in position 2445 (m2G2445) and the guanine in position 2069 (m7G2069) of 23S rRNA. In Enterobacter sp. (strain 638), this protein is Ribosomal RNA large subunit methyltransferase K/L.